Here is a 175-residue protein sequence, read N- to C-terminus: Regenerating islet-derived protein 3-gamma (175 aa).

The first 26 residues, 1–26 (MLPPMALPSVSWMLLSCLILLCQVQG), serve as a signal peptide directing secretion. The propeptide occupies 27–37 (EETQKELPSPR). 3 disulfides stabilise this stretch: cysteine 40–cysteine 51, cysteine 68–cysteine 171, and cysteine 146–cysteine 163. The C-type lectin domain maps to 47–172 (YGSPCYALFL…CDAKLPYVCK (126 aa)). The segment at 103–118 (WIGLHDPTQGSEPDGD) is sufficient to activate EXTL3. Histidine 107 serves as a coordination point for Zn(2+). Positions 114–116 (EPD) match the EPN motif. Zn(2+)-binding residues include glutamate 121 and histidine 145.

In terms of assembly, forms a hexameric membrane-permeabilizing oligomeric pore on membrane phospholipids. The hexamer is formed by three dimers related by helical symmetry. Forms filaments, filamentation traps pore complexes and limits damage to host cells. Interacts with EXTL3. Post-translationally, proteolytic processing by trypsin removes an inhibitory N-terminal propeptide and is essential for peptidoglycan binding and antibacterial activity. In terms of tissue distribution, predominantly expressed in pancreas, where it may be restricted to exocrine pancreas. Moderate expression levels in testis and weak in heart, kidney and placenta.

The protein localises to the secreted. It localises to the cytoplasm. Its activity is regulated as follows. Lipopolysaccharide inhibits pore-forming activity, explaining why is bactericidal for Gram-positive but not Gram-negative bacteria. Functionally, bactericidal C-type lectin which acts exclusively against Gram-positive bacteria and mediates bacterial killing by binding to surface-exposed carbohydrate moieties of peptidoglycan. Restricts bacterial colonization of the intestinal epithelial surface and consequently limits activation of adaptive immune responses by the microbiota. Its function is as follows. Acts as a hormone in response to different stimuli like anti-inflammatory signals, such as IL17A, or gut microbiome. Is secreted by different cell types to activate its receptor EXTL3 and induce cell specific signaling pathways. Induced by IL17A in keratinocytes, regulates keratinocyte proliferation and differentiation after skin injury. In parallel, inhibits skin inflammation through the inhibition of inflammatory cytokines such as IL6 and TNF. Induced by IL22 in lung epithelial cells, inhibits cytokine production and regulates allergic airway inflammation. Induced in small intestine by inulin-enriched diet and Lactobacillus gasseri enriched microbiome, plays a role in the improvement of gut barrier function, the regulation of energy balance and glucose levels. Modulates microbiota composition in duodenal contents. Produced by nociceptor in response to endotoxins, prevents endotoxic death by targeting kynurenine pathway in microglia. Has bacteriostatic activity. In terms of biological role, has bactericidal activity against L.monocytogenes and methicillin-resistant S.aureus. This Homo sapiens (Human) protein is Regenerating islet-derived protein 3-gamma.